Consider the following 814-residue polypeptide: Valine--tRNA ligase (814 aa).

The short motif at P46–H56 is the 'HIGH' region element. Positions K536 to S540 match the 'KMSKS' region motif. K539 contributes to the ATP binding site.

The protein belongs to the class-I aminoacyl-tRNA synthetase family. ValS type 2 subfamily. In terms of assembly, monomer.

The protein resides in the cytoplasm. The enzyme catalyses tRNA(Val) + L-valine + ATP = L-valyl-tRNA(Val) + AMP + diphosphate. Its function is as follows. Catalyzes the attachment of valine to tRNA(Val). As ValRS can inadvertently accommodate and process structurally similar amino acids such as threonine, to avoid such errors, it has a 'posttransfer' editing activity that hydrolyzes mischarged Thr-tRNA(Val) in a tRNA-dependent manner. The protein is Valine--tRNA ligase of Rickettsia prowazekii (strain Madrid E).